We begin with the raw amino-acid sequence, 272 residues long: Indole-3-glycerol phosphate synthase (272 aa).

Belongs to the TrpC family.

It carries out the reaction 1-(2-carboxyphenylamino)-1-deoxy-D-ribulose 5-phosphate + H(+) = (1S,2R)-1-C-(indol-3-yl)glycerol 3-phosphate + CO2 + H2O. The protein operates within amino-acid biosynthesis; L-tryptophan biosynthesis; L-tryptophan from chorismate: step 4/5. This is Indole-3-glycerol phosphate synthase from Mycobacterium leprae (strain Br4923).